The primary structure comprises 836 residues: Glutamate receptor ionotropic, kainate glr-3 (836 aa).

The signal sequence occupies residues 1 to 19 (MFWIAKTLIAFLILLKTDC). Residues 20 to 523 (YKIAIPANLI…WFKFMDPLST (504 aa)) lie on the Extracellular side of the membrane. Cys76 and Cys320 form a disulfide bridge. Residues Asn225, Asn257, Asn356, Asn391, and Asn419 are each glycosylated (N-linked (GlcNAc...) asparagine). L-glutamate-binding positions include 478 to 480 (SLT) and Arg485. The chain crosses the membrane as a helical span at residues 524–544 (QVWIMTFASYFVVSVAIWIIA). Residues 545-600 (KISPYEQFERDEDNGQYKPVDNQFSLRNSFWFTVCSLMQQGSELCPRAASTRLLTG) lie on the Cytoplasmic side of the membrane. Residues 601 to 621 (IWWFFALILISSYTANLAAVL) form a helical membrane-spanning segment. Residues 622–780 (TTRRMETPIE…KRKDQDDGES (159 aa)) are Extracellular-facing. An L-glutamate-binding site is contributed by 651–652 (ST). Asn657 carries N-linked (GlcNAc...) asparagine glycosylation. Glu699 contacts L-glutamate. The helical transmembrane segment at 781–801 (IGGIFIILVVGLVLTAVLVIF) threads the bilayer. The Cytoplasmic segment spans residues 802-836 (ELITTRKPSPAQSQVIRHVNVIPSFKLGFFRWNVN).

The protein belongs to the glutamate-gated ion channel (TC 1.A.10.1) family. Expressed in the intestine and in the ASER neuron. Also expressed in the thermosensitive RIA interneuron.

The protein resides in the cell membrane. The protein localises to the postsynaptic cell membrane. Its activity is regulated as follows. Activated by low temperature of 18 degrees Celsius in ASER neuron. Ionotropic glutamate receptor. Activation by glutamate requires additional verification. L-glutamate acts as an excitatory neurotransmitter at many synapses in the central nervous system. Binding of the excitatory neurotransmitter L-glutamate induces a conformation change, leading to the opening of the cation channel, and thereby converts the chemical signal to an electrical impulse. The receptor then desensitizes rapidly and enters a transient inactive state, characterized by the presence of bound agonist. In terms of biological role, independent of its ionotropic glutamate receptor activity, acts as a thermoreceptor in the ASER neuron where it triggers a calcium response to activate cold avoidance behavior in response to temperatures below 19 degrees Celsius. Possibly functions as a metabotropic cold receptor and acts upstream of the G(o) G protein goa-1 in the ASER neuron. Also functions in cold sensing in the intestine. The sequence is that of Glutamate receptor ionotropic, kainate glr-3 from Caenorhabditis elegans.